The chain runs to 207 residues: Small ribosomal subunit protein uS4c (207 aa).

The segment at Thr22–Gln51 is disordered. The S4 RNA-binding domain maps to Met97 to Leu158.

Belongs to the universal ribosomal protein uS4 family. In terms of assembly, part of the 30S ribosomal subunit. Contacts protein S5. The interaction surface between S4 and S5 is involved in control of translational fidelity.

It is found in the plastid. The protein resides in the chloroplast. In terms of biological role, one of the primary rRNA binding proteins, it binds directly to 16S rRNA where it nucleates assembly of the body of the 30S subunit. With S5 and S12 plays an important role in translational accuracy. The chain is Small ribosomal subunit protein uS4c (rps4) from Chlorella vulgaris (Green alga).